Here is a 452-residue protein sequence, read N- to C-terminus: Bifunctional purine biosynthesis protein PurH (452 aa).

An MGS-like domain is found at 1 to 115 (MKRILVSLYE…KNWKKVKPAF (115 aa)).

This sequence belongs to the PurH family.

The enzyme catalyses (6R)-10-formyltetrahydrofolate + 5-amino-1-(5-phospho-beta-D-ribosyl)imidazole-4-carboxamide = 5-formamido-1-(5-phospho-D-ribosyl)imidazole-4-carboxamide + (6S)-5,6,7,8-tetrahydrofolate. The catalysed reaction is IMP + H2O = 5-formamido-1-(5-phospho-D-ribosyl)imidazole-4-carboxamide. It participates in purine metabolism; IMP biosynthesis via de novo pathway; 5-formamido-1-(5-phospho-D-ribosyl)imidazole-4-carboxamide from 5-amino-1-(5-phospho-D-ribosyl)imidazole-4-carboxamide (10-formyl THF route): step 1/1. Its pathway is purine metabolism; IMP biosynthesis via de novo pathway; IMP from 5-formamido-1-(5-phospho-D-ribosyl)imidazole-4-carboxamide: step 1/1. In Thermotoga maritima (strain ATCC 43589 / DSM 3109 / JCM 10099 / NBRC 100826 / MSB8), this protein is Bifunctional purine biosynthesis protein PurH.